Reading from the N-terminus, the 288-residue chain is Tryptophan 2,3-dioxygenase (288 aa).

Residues 57–61 (FIIQH), tyrosine 119, and arginine 123 each bind substrate. Histidine 246 provides a ligand contact to heme. Residue threonine 260 coordinates substrate.

It belongs to the tryptophan 2,3-dioxygenase family. In terms of assembly, homotetramer. Heme is required as a cofactor.

The catalysed reaction is L-tryptophan + O2 = N-formyl-L-kynurenine. It functions in the pathway amino-acid degradation; L-tryptophan degradation via kynurenine pathway; L-kynurenine from L-tryptophan: step 1/2. In terms of biological role, heme-dependent dioxygenase that catalyzes the oxidative cleavage of the L-tryptophan (L-Trp) pyrrole ring and converts L-tryptophan to N-formyl-L-kynurenine. Catalyzes the oxidative cleavage of the indole moiety. This Pseudomonas aeruginosa (strain UCBPP-PA14) protein is Tryptophan 2,3-dioxygenase.